A 215-amino-acid chain; its full sequence is 3-isopropylmalate dehydratase small subunit (215 aa).

This sequence belongs to the LeuD family. LeuD type 1 subfamily. As to quaternary structure, heterodimer of LeuC and LeuD.

It catalyses the reaction (2R,3S)-3-isopropylmalate = (2S)-2-isopropylmalate. It functions in the pathway amino-acid biosynthesis; L-leucine biosynthesis; L-leucine from 3-methyl-2-oxobutanoate: step 2/4. In terms of biological role, catalyzes the isomerization between 2-isopropylmalate and 3-isopropylmalate, via the formation of 2-isopropylmaleate. The protein is 3-isopropylmalate dehydratase small subunit of Saccharophagus degradans (strain 2-40 / ATCC 43961 / DSM 17024).